An 894-amino-acid chain; its full sequence is MIQQIDAPLREDVRLLGNLLGETLKQHAGQDLFNQIEQIRALAKGARDGQAETEKKLEQLFLDLKDEEILPLTRAFSYFLNFANIAEQYHVVRSRRRSEFDEQGPPPNPLIHLFEKFKQNQISSKQLFQQVSNLSIELVLTAHPTEVSRRTLIQKYDDINEGLSKLDQQKLTPRERQQVLDDLKQLICSAWQTDEIRQNKPTPLDEAKWGFTTIEQTLWNAVPKFVRELDTLVHQHCDAHLPLDISPIRFASWMGGDRDGNPNVTHNVTQEVLWLSRWQAADLYLRDIEDLRWELSIQACSEELSQTLGRRHPEPYREYLRSTRERLKATRQWLSLRLQGLDGDDSQIIRHKQELLDPLLLCHRSLMECNLPEIANGKLLDFIYRVNCFGIELLKLDIRQESGRHRQAISAITEYLGLGNFESWTEQARQNFLIQELQSKRPLLPKYLNEPEGSLIEHPDVKEVFATMRTLAEQPPESLGAYIISMAEYASDVLAVLLLQKEAGILQPLRVVPLFETLKDLDGAAKTMETLFNMHWYKQHIQGKHEVMIGYSDSAKDAGFMSANWAQYRAQEELTAVAKSHGVQLTLFHGRGGSISRGGAPTQQALFSQPPGSISGAIRVTEQGEMIRFKFGLEGVALQNLEIYTAATLEATLLPPPVPKQEWRDLMHQMTDISVRVYRETVRENPHFVQYLRTVTPELELQMLPLGSRPAKRKVSGGIESLRAIPWVFAWTQIRLMLPAWLGTGAAINQVIDENKKAVLDEMLAEWPYFQTLIDMLEMVLSKSDANIALYYESHLTDNEDLKILGEMLRQRLNDAVQTLLSMKGESKLLSKNDVLDQAMQVRKPYLLPLHLLQAELMKRRRLYTAQSNAERTPVDHALMVSIAGIAAGLRNTG.

Active-site residues include His143 and Lys556.

This sequence belongs to the PEPCase type 1 family. It depends on Mg(2+) as a cofactor.

It carries out the reaction oxaloacetate + phosphate = phosphoenolpyruvate + hydrogencarbonate. Functionally, forms oxaloacetate, a four-carbon dicarboxylic acid source for the tricarboxylic acid cycle. This is Phosphoenolpyruvate carboxylase from Acinetobacter baylyi (strain ATCC 33305 / BD413 / ADP1).